The sequence spans 629 residues: Leucine-rich repeat protein soc-2 homolog (629 aa).

The span at 1–19 (MNLCSSGATASTTSLSSTG) shows a compositional bias: low complexity. The disordered stretch occupies residues 1–133 (MNLCSSGATA…PTTKKSKPIQ (133 aa)). Residues 21–45 (RNGGTSEGGGEGAGGGGGSGGGGGN) show a composition bias toward gly residues. LRR repeat units lie at residues 149–170 (GIKR…VKEC), 172–193 (HLTE…IGCL), 195–217 (NLRN…QNCK), 218–239 (QLKV…IYRL), 241–262 (TLTT…LRQL), 264–285 (NLTM…IGAL), 287–308 (NLTT…IGNC), 310–331 (NLSA…IGNL), 333–355 (SLVR…KNCK), 356–377 (SMDE…MLAS), 380–401 (GLTT…GPAQ), 404–425 (NVYS…IFSR), 428–449 (GLTK…IGTW), 451–472 (NMVE…IMNL), 474–495 (NLEI…IGNM), 497–518 (KLRI…IGLL), 520–541 (ELQR…IGHL), 543–564 (NLTH…IGSL), 566–588 (GLEN…LALC), and 590–611 (NLKY…IQAG).

It belongs to the SHOC2 family.

Its function is as follows. Acts as a Ras effector and participates in MAPK pathway activation. Probably acts as a regulatory subunit of protein phosphatase that specifically dephosphorylates Raf kinase and stimulate Raf activity at specialized signaling complexes upon Ras activation. This Drosophila pseudoobscura pseudoobscura (Fruit fly) protein is Leucine-rich repeat protein soc-2 homolog (Sur-8).